Consider the following 143-residue polypeptide: Probable prefoldin subunit 2 (143 aa).

It belongs to the prefoldin subunit beta family. Heterohexamer of two PFD-alpha type and four PFD-beta type subunits.

Binds specifically to cytosolic chaperonin (c-CPN) and transfers target proteins to it. Binds to nascent polypeptide chain and promotes folding in an environment in which there are many competing pathways for nonnative proteins. This chain is Probable prefoldin subunit 2, found in Drosophila melanogaster (Fruit fly).